The sequence spans 287 residues: D-alanine--D-alanine ligase (287 aa).

The ATP-grasp domain maps to 98-283; sequence KTKQIAQSVG…FDDVVRITVE (186 aa). 124 to 169 provides a ligand contact to ATP; it reads PVIIKPVDEGSSKGLFLCNNKEEAEEAVKKLAKPIIEDYIIGEELT. 3 residues coordinate Mg(2+): D238, E250, and N252.

It belongs to the D-alanine--D-alanine ligase family. Mg(2+) serves as cofactor. The cofactor is Mn(2+).

The protein resides in the cytoplasm. It carries out the reaction 2 D-alanine + ATP = D-alanyl-D-alanine + ADP + phosphate + H(+). Its pathway is cell wall biogenesis; peptidoglycan biosynthesis. In terms of biological role, cell wall formation. The protein is D-alanine--D-alanine ligase of Fusobacterium nucleatum subsp. nucleatum (strain ATCC 25586 / DSM 15643 / BCRC 10681 / CIP 101130 / JCM 8532 / KCTC 2640 / LMG 13131 / VPI 4355).